A 1939-amino-acid chain; its full sequence is Myosin-8 (1939 aa).

The Myosin N-terminal SH3-like domain occupies 35 to 84 (DAKTSVFVAEPKASYVKSTIQSKEGGKVTVKTEGGATLTVREDQVFPMNP). Phosphothreonine is present on residues T66 and T71. A Myosin motor domain is found at 88–783 (DKIEDMAMMT…LLGLLEEMRD (696 aa)). An N6,N6,N6-trimethyllysine modification is found at K132. Position 181–188 (181–188 (GESGAGKT)) interacts with ATP. Phosphotyrosine is present on Y391. At T421 the chain carries Phosphothreonine. Y426 is subject to Phosphotyrosine. Residue S627 is modified to Phosphoserine. An actin-binding region spans residues 660–682 (LNKLMTNLRSTHPHFVRCIIPNE). Pros-methylhistidine is present on H758. The segment at 762–776 (KFGHTKVFFKAGLLG) is actin-binding. The IQ domain occupies 783–815 (DEKLSQIITRTQAVCRGFLMRVEYQKMLQRREA). The stretch at 844–1939 (LLKSAETEKE…REVHTKISAE (1096 aa)) forms a coiled coil. Residues S1093, S1097, S1163, and S1238 each carry the phosphoserine modification. Residue T1242 is modified to Phosphothreonine. At S1244 the chain carries Phosphoserine. T1256 is subject to Phosphothreonine. Residue S1262 is modified to Phosphoserine. T1266 and T1287 each carry phosphothreonine. 3 positions are modified to phosphoserine: S1293, S1304, and S1307. Y1465 carries the post-translational modification Phosphotyrosine. Phosphothreonine is present on T1468. Position 1475 is a phosphoserine (S1475). Y1493 bears the Phosphotyrosine mark. Residue S1496 is modified to Phosphoserine. Phosphothreonine is present on T1502. S1515 is modified (phosphoserine). At T1518 the chain carries Phosphothreonine. Phosphoserine occurs at positions 1555, 1575, 1601, 1604, 1715, and 1727. At T1731 the chain carries Phosphothreonine. S1740 carries the phosphoserine modification.

This sequence belongs to the TRAFAC class myosin-kinesin ATPase superfamily. Myosin family. As to quaternary structure, muscle myosin is a hexameric protein that consists of 2 heavy chain subunits (MHC), 2 alkali light chain subunits (MLC) and 2 regulatory light chain subunits (MLC-2).

It localises to the cytoplasm. The protein resides in the myofibril. In terms of biological role, muscle contraction. The protein is Myosin-8 (MYH8) of Canis lupus familiaris (Dog).